The following is a 181-amino-acid chain: dCTP deaminase (181 aa).

DCTP contacts are provided by residues 100-105 (RSTFAR) and aspartate 116. The active-site Proton donor/acceptor is the glutamate 126. Tyrosine 158 and glutamine 165 together coordinate dCTP. Residues 160–181 (GKYQGQRGVTPPKLDNSSSKNF) form a disordered region.

The protein belongs to the dCTP deaminase family. As to quaternary structure, homotrimer.

It carries out the reaction dCTP + H2O + H(+) = dUTP + NH4(+). It participates in pyrimidine metabolism; dUMP biosynthesis; dUMP from dCTP (dUTP route): step 1/2. Catalyzes the deamination of dCTP to dUTP. This chain is dCTP deaminase, found in Desulfurococcus amylolyticus (strain DSM 18924 / JCM 16383 / VKM B-2413 / 1221n) (Desulfurococcus kamchatkensis).